The following is a 356-amino-acid chain: Activating signal cointegrator 1 complex subunit 1 (356 aa).

A required for interaction with ASCC3 region spans residues 1–52; the sequence is MDVLRPQIVTFDGRNYRKNPIQEKQYQHEEDEDFYPDSMEYSDEPCGAYEVA. The region spanning 57 to 119 is the KH domain; sequence GFRATVSAPS…NGVVSARTRI (63 aa).

In terms of assembly, identified in the ASCC complex that contains ASCC1, ASCC2 and ASCC3. Interacts directly with ASCC3. The ASCC complex interacts with ALKBH3. Part of the ASC-1 complex, that contains TRIP4, ASCC1, ASCC2 and ASCC3. Interacts with CSRP1. Interacts with ZCCHC4. In terms of tissue distribution, expressed in the spinal cord, brain, paraspinal ganglia, thyroid, and submandibular glands.

The protein resides in the nucleus. It localises to the nucleus speckle. Functionally, plays a role in DNA damage repair as component of the ASCC complex. Part of the ASC-1 complex that enhances NF-kappa-B, SRF and AP1 transactivation. In cells responding to gastrin-activated paracrine signals, it is involved in the induction of SERPINB2 expression by gastrin. May also play a role in the development of neuromuscular junction. This is Activating signal cointegrator 1 complex subunit 1 (Ascc1) from Mus musculus (Mouse).